The following is a 51-amino-acid chain: Sperm protamine P1 (51 aa).

Cystine bridges form between cysteine 7–cysteine 15 and cysteine 40–cysteine 48.

It belongs to the protamine P1 family. Cross-linked by interchain disulfide bonds around the DNA-helix. In terms of processing, phosphorylated by SRPK1. In terms of tissue distribution, testis.

The protein localises to the nucleus. It localises to the chromosome. Functionally, protamines substitute for histones in the chromatin of sperm during the haploid phase of spermatogenesis. They compact sperm DNA into a highly condensed, stable and inactive complex. The sequence is that of Sperm protamine P1 (PRM1) from Bos taurus (Bovine).